Here is a 424-residue protein sequence, read N- to C-terminus: Myb family transcription factor RLI1 (424 aa).

The segment at 144–165 (RPQKRDSGERTPLPPPSQQQHQ) is disordered. The HTH myb-type domain occupies 238-298 (APSKTRIRWT…HLQKYRIAKY (61 aa)). Residues 269–294 (PKGILKLMNSDGLTIYHIKSHLQKYR) constitute a DNA-binding region (H-T-H motif). Residues 326–391 (MQITEALRVQ…ELDDVVAFAA (66 aa)) adopt a coiled-coil conformation. Residues 342-347 (LHEQLE) carry the LHEQLE motif.

Belongs to the MYB-CC family. As to quaternary structure, interacts with SPX1 and SPX2 in the nucleus; these interactions prevent binding to the promoters of target genes, thus regulating negatively leaf inclination in response to phosphate (Pi) starvation. In terms of assembly, homodimer. Interacts with PHR2 in the nucleus. Mostly expressed in roots and leaves blades and, to a lower extent, in leaves sheaths, culms and panicles. Localized in leaves lamina joints. As to expression, expressed equally in shoots and roots. In terms of tissue distribution, mostly expressed in shoots and, to a lower extent, in roots.

Its subcellular location is the nucleus. Transcription factor binding to specific DNA sequences of target genes promoters, such as the motif R1BS 5'-NAKATNCN-3' and the motif P1BS 5'-GNATATNC-3' to trigger their expression. Nitrate-induced component involved in modulating phosphate (Pi) response and homeostasis together with PHR2; activates directly the expression of Pi starvation-induced (PSI) genes upon nitrate disponibility, thus triggering the nitrate-induced phosphate response (NIPR) promoting Pi uptake activity. Functionally, binds preferentially to the P1BS motif 5'-GNATATNC-3' in target genes promoters. In terms of biological role, binds preferentially to the R1BS motif 5'-NAKATNCN-3' in target genes promoters, including several genes involved in the plant hormone signal transduction pathway. Involved in the shoot architecture; positively regulates leaf inclination by affecting lamina joint cell elongation via the direct promotion of ILI4/BU1 and BC1 genes expression, especially in response to phosphate (Pi) availability. Regulates both brassinolide (BL) biosynthesis and signaling by directly activating BL-biosynthesis and signaling genes. The chain is Myb family transcription factor RLI1 from Oryza sativa subsp. japonica (Rice).